The chain runs to 465 residues: UDP-glycosyltransferase 89A2 (465 aa).

Residues S291, 342-344 (VSQ), 359-367 (HCGWNSVLE), and 381-384 (EADQ) each bind UDP-alpha-D-glucose.

The protein belongs to the UDP-glycosyltransferase family.

Functionally, glucosyltransferase that glucosylates benzoates and benzoate derivatives in vitro. In Arabidopsis thaliana (Mouse-ear cress), this protein is UDP-glycosyltransferase 89A2 (UGT89A2).